A 220-amino-acid chain; its full sequence is Guanylate kinase (220 aa).

Positions 11–190 (GVLFVLSSPS…CYGEVMAILR (180 aa)) constitute a Guanylate kinase-like domain. 18–25 (SPSGAGKT) contributes to the ATP binding site.

It belongs to the guanylate kinase family.

The protein localises to the cytoplasm. The catalysed reaction is GMP + ATP = GDP + ADP. Its function is as follows. Essential for recycling GMP and indirectly, cGMP. This is Guanylate kinase from Sphingopyxis alaskensis (strain DSM 13593 / LMG 18877 / RB2256) (Sphingomonas alaskensis).